The chain runs to 108 residues: Integration host factor subunit alpha (108 aa).

Belongs to the bacterial histone-like protein family. As to quaternary structure, heterodimer of an alpha and a beta chain.

This protein is one of the two subunits of integration host factor, a specific DNA-binding protein that functions in genetic recombination as well as in transcriptional and translational control. This chain is Integration host factor subunit alpha, found in Rhodopseudomonas palustris (strain BisB18).